Here is a 233-residue protein sequence, read N- to C-terminus: Peroxisomal membrane protein 11-5 (233 aa).

Topologically, residues 1–92 (MSSLESARAD…PLILLGKSKN (92 aa)) are cytoplasmic. Residues 93 to 113 (ALLSTFLFLDQIVWAGRTGIY) traverse the membrane as a helical segment. The Lumenal portion of the chain corresponds to 114 to 206 (KNKERAEFLS…LLQLAPKKVT (93 aa)). The chain crosses the membrane as a helical span at residues 207-226 (PRVTGAFGFASSLIACYQLL).

This sequence belongs to the peroxin-11 family. As to expression, expressed in seedlings, roots, shoots, leaf sheaths, flag leaf, panicles, spikelets, and endosperm.

Its subcellular location is the peroxisome membrane. In terms of biological role, involved in peroxisomal proliferation. The sequence is that of Peroxisomal membrane protein 11-5 (PEX11-5) from Oryza sativa subsp. japonica (Rice).